Consider the following 287-residue polypeptide: ATP synthase gamma chain (287 aa).

Belongs to the ATPase gamma chain family. F-type ATPases have 2 components, CF(1) - the catalytic core - and CF(0) - the membrane proton channel. CF(1) has five subunits: alpha(3), beta(3), gamma(1), delta(1), epsilon(1). CF(0) has three main subunits: a, b and c.

It localises to the cell inner membrane. Its function is as follows. Produces ATP from ADP in the presence of a proton gradient across the membrane. The gamma chain is believed to be important in regulating ATPase activity and the flow of protons through the CF(0) complex. The protein is ATP synthase gamma chain of Shigella sonnei (strain Ss046).